Reading from the N-terminus, the 256-residue chain is Peroxisomal membrane protein PMP30A (256 aa).

The protein belongs to the peroxin-11 family.

The protein resides in the peroxisome membrane. In terms of biological role, involved in peroxisomal proliferation. Could participate in peroxisomal elongation or fission. May be involved in parceling of peroxisomes into regular quanta. In Candida boidinii (Yeast), this protein is Peroxisomal membrane protein PMP30A (PEX11A).